We begin with the raw amino-acid sequence, 614 residues long: Leucine-rich repeat and immunoglobulin-like domain-containing nogo receptor-interacting protein 1 (614 aa).

The signal sequence occupies residues 1-35; that stretch reads MLAGGVRSMPSPLLACWQPILLLVLGSVLSGSATG. Intrachain disulfides connect Cys36-Cys42 and Cys40-Cys51. In terms of domain architecture, LRRNT spans 36–65; that stretch reads CPPRCECSAQDRAVLCHRKRFVAVPEGIPT. Over 36-555 the chain is Extracellular; the sequence is CPPRCECSAQ…FDIKTLIIAT (520 aa). LRR repeat units follow at residues 66–87, 90–111, 114–135, 138–159, 162–183, 186–207, 210–231, 258–279, 282–303, 306–327, and 330–351; these read ETRL…EFAS, HLEE…AFNN, NLRT…VFTG, NLTK…MFQD, NLKS…AFSG, SLEQ…ALSH, GLIV…SFKR, NLTS…AVRH, YLRF…MLHE, RLQE…AFRG, and YLRV…VFHS. Asn138 is a glycosylation site (N-linked (GlcNAc...) asparagine). A glycan (N-linked (GlcNAc...) asparagine) is linked at Asn196. Residues Asn258, Asn268, and Asn287 are each glycosylated (N-linked (GlcNAc...) asparagine). Asn335 carries N-linked (GlcNAc...) asparagine glycosylation. The 55-residue stretch at 363–417 folds into the LRRCT domain; it reads NPLACDCRLLWVFRRRWRLNFNRQQPTCATPEFVQGKEFKDFPDVLLPNYFTCRR. 3 disulfides stabilise this stretch: Cys367–Cys390, Cys369–Cys415, and Cys440–Cys491. The 103-residue stretch at 405–507 folds into the Ig-like C2-type domain; it reads PDVLLPNYFT…GNDSMPAHLH (103 aa). Residues Asn486, Asn499, Asn520, and Asn536 are each glycosylated (N-linked (GlcNAc...) asparagine). A helical membrane pass occupies residues 556 to 576; that stretch reads TMGFISFLGVVLFCLVLLFLW. Residues 577-614 are Cytoplasmic-facing; the sequence is SRGKGNTKHNIEIEYVPRKSDAGISSADAPRKFNMKMI. A Phosphoserine modification is found at Ser596.

In terms of assembly, homotetramer. Forms a ternary complex with RTN4R/NGFR and RTN4R/TNFRSF19. Interacts with NGRF, RTN4R and MYT1L. In terms of processing, N-glycosylated. Contains predominantly high-mannose glycans.

The protein localises to the cell membrane. Functionally, functional component of the Nogo receptor signaling complex (RTN4R/NGFR) in RhoA activation responsible for some inhibition of axonal regeneration by myelin-associated factors. Is also an important negative regulator of oligodentrocyte differentiation and axonal myelination. Acts in conjunction with RTN4 and RTN4R in regulating neuronal precursor cell motility during cortical development. The chain is Leucine-rich repeat and immunoglobulin-like domain-containing nogo receptor-interacting protein 1 (LINGO1) from Pongo abelii (Sumatran orangutan).